Here is a 327-residue protein sequence, read N- to C-terminus: Cobalamin biosynthesis protein CobD (327 aa).

Transmembrane regions (helical) follow at residues 61 to 78, 80 to 102, 160 to 182, and 300 to 322; these read MWLT…GLVI, SILP…ILLA, GIVA…YKFI, and AALV…ASLV.

It belongs to the CobD/CbiB family.

The protein resides in the cell membrane. It functions in the pathway cofactor biosynthesis; adenosylcobalamin biosynthesis. Its function is as follows. Converts cobyric acid to cobinamide by the addition of aminopropanol on the F carboxylic group. This Brucella melitensis biotype 1 (strain ATCC 23456 / CCUG 17765 / NCTC 10094 / 16M) protein is Cobalamin biosynthesis protein CobD.